We begin with the raw amino-acid sequence, 224 residues long: Testis-expressed protein 30 (224 aa).

This chain is Testis-expressed protein 30 (TEX30), found in Bos taurus (Bovine).